The sequence spans 444 residues: Cadaverine/lysine antiporter (444 aa).

The next 12 membrane-spanning stretches (helical) occupy residues 7–27 (IGLF…GIAL), 35–55 (IGGI…SLAY), 95–115 (IGNL…FPVL), 123–143 (IACI…GTWV), 149–169 (IGLV…WHWF), 193–213 (ILLC…TGMV), 222–242 (LATM…TQVL), 273–293 (LVSA…MMLV), 323–343 (LLLA…MNSA), 354–374 (LTGI…VDLI), 384–404 (FVSL…LMGA), and 405–425 (SSFE…FYAR).

It belongs to the amino acid-polyamine-organocation (APC) superfamily. Basic amino acid/polyamine antiporter (APA) (TC 2.A.3.2) family.

Its subcellular location is the cell inner membrane. It catalyses the reaction cadaverine(in) + L-lysine(out) = cadaverine(out) + L-lysine(in). In terms of biological role, under acidic conditions, in the presence of lysine, functions as a cadaverine:lysine antiporter that facilitates the excretion of cadaverine and the uptake of lysine. The polypeptide is Cadaverine/lysine antiporter (cadB) (Escherichia coli O157:H7).